A 200-amino-acid polypeptide reads, in one-letter code: Large ribosomal subunit protein uL4 (200 aa).

The tract at residues 42-65 (TRAQKTRSEVSGGGAKPWRQKGTG) is disordered.

Belongs to the universal ribosomal protein uL4 family. As to quaternary structure, part of the 50S ribosomal subunit.

Functionally, one of the primary rRNA binding proteins, this protein initially binds near the 5'-end of the 23S rRNA. It is important during the early stages of 50S assembly. It makes multiple contacts with different domains of the 23S rRNA in the assembled 50S subunit and ribosome. In terms of biological role, forms part of the polypeptide exit tunnel. In Vibrio atlanticus (strain LGP32) (Vibrio splendidus (strain Mel32)), this protein is Large ribosomal subunit protein uL4.